Here is a 234-residue protein sequence, read N- to C-terminus: 2-phospho-L-lactate guanylyltransferase (234 aa).

The protein belongs to the CofC family. Homodimer.

It catalyses the reaction (2S)-2-phospholactate + GTP + H(+) = (2S)-lactyl-2-diphospho-5'-guanosine + diphosphate. It functions in the pathway cofactor biosynthesis; coenzyme F420 biosynthesis. Functionally, guanylyltransferase that catalyzes the activation of (2S)-2-phospholactate (2-PL) as (2S)-lactyl-2-diphospho-5'-guanosine, via the condensation of 2-PL with GTP. It is involved in the biosynthesis of coenzyme F420, a hydride carrier cofactor. The sequence is that of 2-phospho-L-lactate guanylyltransferase from Methanobrevibacter ruminantium (strain ATCC 35063 / DSM 1093 / JCM 13430 / OCM 146 / M1) (Methanobacterium ruminantium).